Consider the following 240-residue polypeptide: Uridylate kinase (240 aa).

14–17 (KLSG) provides a ligand contact to ATP. Gly56 provides a ligand contact to UMP. ATP-binding residues include Gly57 and Arg61. Residues Asp76 and 137–144 (TGNPFFTT) each bind UMP. Residues Thr164, Tyr170, and Asp173 each coordinate ATP.

The protein belongs to the UMP kinase family. Homohexamer.

It is found in the cytoplasm. It carries out the reaction UMP + ATP = UDP + ADP. Its pathway is pyrimidine metabolism; CTP biosynthesis via de novo pathway; UDP from UMP (UMPK route): step 1/1. Inhibited by UTP. Catalyzes the reversible phosphorylation of UMP to UDP. The chain is Uridylate kinase from Albidiferax ferrireducens (strain ATCC BAA-621 / DSM 15236 / T118) (Rhodoferax ferrireducens).